Consider the following 205-residue polypeptide: NADH-quinone oxidoreductase subunit J (205 aa).

5 helical membrane-spanning segments follow: residues 1-21 (MPIFFYLFTTLIIISSLCVVL), 26-46 (VYSVLWLIFTFINGSGLMILL), 54-74 (LLIVIYVGAVAVLFLFVIMML), 89-109 (LSLSIFITLIMFADLVITIIL), and 142-162 (FMLPFQIAGLILFVAMISCIT).

This sequence belongs to the complex I subunit 6 family.

The protein resides in the cell membrane. The catalysed reaction is a quinone + NADH + 5 H(+)(in) = a quinol + NAD(+) + 4 H(+)(out). Its function is as follows. NDH-1 shuttles electrons from NADH, via FMN and iron-sulfur (Fe-S) centers, to quinones in the respiratory chain. Couples the redox reaction to proton translocation (for every two electrons transferred, four hydrogen ions are translocated across the cytoplasmic membrane), and thus conserves the redox energy in a proton gradient. The sequence is that of NADH-quinone oxidoreductase subunit J (nuoJ) from Rickettsia prowazekii (strain Madrid E).